The chain runs to 617 residues: V-type proton ATPase catalytic subunit A (617 aa).

A Phosphothreonine modification is found at Thr136. 250 to 257 (GAFGCGKT) lines the ATP pocket. Residue Ser384 is modified to Phosphoserine; by AMPK.

This sequence belongs to the ATPase alpha/beta chains family. In terms of assembly, V-ATPase is a heteromultimeric enzyme made up of two complexes: the ATP-hydrolytic V1 complex and the proton translocation V0 complex. The V1 complex consists of three catalytic AB heterodimers that form a heterohexamer, three peripheral stalks each consisting of EG heterodimers, one central rotor including subunits D and F, and the regulatory subunits C and H. The proton translocation complex V0 consists of the proton transport subunit a, a ring of proteolipid subunits c9c'', rotary subunit d, subunits e and f, and the accessory subunits ATP6AP1/Ac45 and ATP6AP2/PRR. Interacts with the V0 complex V-ATPase subunit a4 ATP6V0A4. Interacts with WFS1. Interacts with alpha-crystallin B chain/CRYAB and with MTOR, forming a ternary complex. In terms of processing, phosphorylation at Ser-384 by AMPK down-regulates its enzyme activity.

Its subcellular location is the cytoplasm. The protein resides in the cytosol. It localises to the cytoplasmic vesicle. The protein localises to the secretory vesicle. It is found in the clathrin-coated vesicle membrane. Its subcellular location is the lysosome. The catalysed reaction is ATP + H2O + 4 H(+)(in) = ADP + phosphate + 5 H(+)(out). With respect to regulation, ATP hydrolysis occurs at the interface between the nucleotide-binding domains of subunits A and B. ATP hydrolysis triggers a conformational change in the subunits D and F, which induces a shift of subunit d. The c-ring is subsequently rotated and results in a continuous proton translocation across the membrane. Functionally, catalytic subunit of the V1 complex of vacuolar(H+)-ATPase (V-ATPase), a multisubunit enzyme composed of a peripheral complex (V1) that hydrolyzes ATP and a membrane integral complex (V0) that translocates protons. V-ATPase is responsible for acidifying and maintaining the pH of intracellular compartments and in some cell types, is targeted to the plasma membrane, where it is responsible for acidifying the extracellular environment. In aerobic conditions, involved in intracellular iron homeostasis, thus triggering the activity of Fe(2+) prolyl hydroxylase (PHD) enzymes, and leading to HIF1A hydroxylation and subsequent proteasomal degradation. May play a role in neurite development and synaptic connectivity. The polypeptide is V-type proton ATPase catalytic subunit A (ATP6V1A) (Sus scrofa (Pig)).